The chain runs to 256 residues: Venom allergen-1 (256 aa).

Residues 1–21 (MAFNGIALLITATIFIGSCYA) form the signal peptide. The 147-residue stretch at 65–211 (LNTHNKLRAE…MINYYLVCNY (147 aa)) folds into the SCP domain. 2 N-linked (GlcNAc...) asparagine glycosylation sites follow: asparagine 146 and asparagine 210.

The protein belongs to the CRISP family.

Its subcellular location is the secreted. Functionally, activates autophagy in human monocytic cells, dendritic cells and macrophages. In terms of biological role, (Microbial infection) Promotes Zika virus replication in human dendritic cells and macrophages. Facilitates Zika virus transmission from infected mosquitoes to the host in mouse model. This chain is Venom allergen-1, found in Aedes albopictus (Asian tiger mosquito).